The sequence spans 555 residues: WRKY transcription factor WRKY24 (555 aa).

Disordered stretches follow at residues 133 to 183 (TAPA…AGAN) and 197 to 248 (SEMA…CTFP). Low complexity predominate over residues 163 to 183 (QQQQQPWGYQQQPAGMDAGAN). The WRKY 1 DNA-binding region spans 214 to 278 (SQRRSSDDGY…YKGTHNHAKP (65 aa)). Positions 253–259 (KKKVERS) match the Nuclear localization signal motif. The disordered stretch occupies residues 270 to 365 (KGTHNHAKPQ…DGEGISMAGN (96 aa)). Polar residues-rich tracts occupy residues 277–294 (KPQNTRRNSGSSAAQVLQ) and 310–320 (TAATPENSSAS). Basic and acidic residues predominate over residues 347 to 356 (DSKRWRKDGD). A DNA-binding region (WRKY 2) is located at residues 379 to 444 (SDIDILDDGY…YEGKHNHDVP (66 aa)). The segment at 466–555 (HPYLPNQPPP…DDMFFQNSLY (90 aa)) is transcription repression of gibberellic acid (GA)-induced promoters. The disordered stretch occupies residues 514–555 (FDDARGSYMSQHQQQQRQNDAMHASRAKEEPGDDMFFQNSLY).

It belongs to the WRKY group II-a family. Expressed in aleurone cells. Mostly expressed in aleurone layers and leaves, and, to a lower extent, in roots, panicles and embryos.

It localises to the nucleus. In terms of biological role, transcription activator. Interacts specifically with the W box (5'-(T)TGAC[CT]-3'), a frequently occurring elicitor-responsive cis-acting element. Negative regulator of both gibberellic acid (GA) and abscisic acid (ABA) signaling in aleurone cells, probably by interfering with GAM1, via the specific repression of GA- and ABA-induced promoters. The chain is WRKY transcription factor WRKY24 from Oryza sativa subsp. japonica (Rice).